A 364-amino-acid polypeptide reads, in one-letter code: Aminomethyltransferase (364 aa).

Belongs to the GcvT family. As to quaternary structure, the glycine cleavage system is composed of four proteins: P, T, L and H.

It catalyses the reaction N(6)-[(R)-S(8)-aminomethyldihydrolipoyl]-L-lysyl-[protein] + (6S)-5,6,7,8-tetrahydrofolate = N(6)-[(R)-dihydrolipoyl]-L-lysyl-[protein] + (6R)-5,10-methylene-5,6,7,8-tetrahydrofolate + NH4(+). In terms of biological role, the glycine cleavage system catalyzes the degradation of glycine. The chain is Aminomethyltransferase from Shewanella sp. (strain ANA-3).